The following is a 29-amino-acid chain: Cytolysin Oshem 1 (29 aa).

It localises to the secreted. The protein resides in the nematocyst. The protein localises to the target cell membrane. Its function is as follows. Cytolysin that shows moderate hemolysis and moderate myonecrosis. This chain is Cytolysin Oshem 1, found in Olindias sambaquiensis (Hydromedusa).